We begin with the raw amino-acid sequence, 362 residues long: tRNA/tmRNA (uracil-C(5))-methyltransferase (362 aa).

Positions 182, 210, 215, 231, and 293 each coordinate S-adenosyl-L-methionine. C318 functions as the Nucleophile in the catalytic mechanism. The active-site Proton acceptor is E352.

It belongs to the class I-like SAM-binding methyltransferase superfamily. RNA M5U methyltransferase family. TrmA subfamily.

The catalysed reaction is uridine(54) in tRNA + S-adenosyl-L-methionine = 5-methyluridine(54) in tRNA + S-adenosyl-L-homocysteine + H(+). It catalyses the reaction uridine(341) in tmRNA + S-adenosyl-L-methionine = 5-methyluridine(341) in tmRNA + S-adenosyl-L-homocysteine + H(+). In terms of biological role, dual-specificity methyltransferase that catalyzes the formation of 5-methyluridine at position 54 (m5U54) in all tRNAs, and that of position 341 (m5U341) in tmRNA (transfer-mRNA). The chain is tRNA/tmRNA (uracil-C(5))-methyltransferase from Neisseria meningitidis serogroup A / serotype 4A (strain DSM 15465 / Z2491).